A 305-amino-acid chain; its full sequence is Ribonuclease BN (305 aa).

Zn(2+) is bound by residues His-64, His-66, Asp-68, His-69, His-141, Asp-212, and His-270. Asp-68 serves as the catalytic Proton acceptor.

Belongs to the RNase Z family. RNase BN subfamily. In terms of assembly, homodimer. The cofactor is Zn(2+).

In terms of biological role, zinc phosphodiesterase, which has both exoribonuclease and endoribonuclease activities. The chain is Ribonuclease BN from Shigella flexneri.